The chain runs to 163 residues: Antimicrobial peptide 2 (163 aa).

An N-terminal signal peptide occupies residues 1 to 22 (MLNMKSFALLMLFATLVGVTIA). 2 consecutive Chitin-binding type-1 domains span residues 26–66 (NGKC…EIEP) and 69–107 (AGQCYRGRCSGGLCCSKYGYCGSGPAYCGLGMCQGSCLP). Intrachain disulfides connect C29/C42, C36/C48, and C41/C55. A propeptide spanning residues 58-67 (NTPLSEIEPT) is cleaved from the precursor. Cystine bridges form between C72/C83, C77/C89, C82/C96, and C101/C105. Positions 100-163 (MCQGSCLPDM…QVEPAVTKAP (64 aa)) are excised as a propeptide.

In terms of tissue distribution, expressed in roots, flowers, stem and leaves.

Its function is as follows. Antimicrobial peptide. This chain is Antimicrobial peptide 2, found in Stellaria media (Common chickweed).